A 384-amino-acid polypeptide reads, in one-letter code: Na(+)/H(+) antiporter NhaA (384 aa).

Transmembrane regions (helical) follow at residues 17–37 (SGLF…SAIA), 53–73 (LEYW…GLEL), 89–109 (MLPI…FLVM), 118–138 (GAGI…SLLG), 147–167 (IFLT…IAVF), 171–191 (TLLW…LILN), 198–218 (LIPY…SGVH), 251–271 (PVAF…VLSS), 283–303 (IGIA…LSML), 321–341 (ILAV…ITLL), and 354–374 (FVIL…LKYV).

Belongs to the NhaA Na(+)/H(+) (TC 2.A.33) antiporter family.

It localises to the cell inner membrane. The enzyme catalyses Na(+)(in) + 2 H(+)(out) = Na(+)(out) + 2 H(+)(in). Na(+)/H(+) antiporter that extrudes sodium in exchange for external protons. The sequence is that of Na(+)/H(+) antiporter NhaA from Flavobacterium psychrophilum (strain ATCC 49511 / DSM 21280 / CIP 103535 / JIP02/86).